Reading from the N-terminus, the 380-residue chain is Dynactin subunit 2 (380 aa).

The segment at 1 to 40 is disordered; it reads MADPKFQNLPGIAYDQPDVYETPDDPETDTSDYYEEEPEN. Over residues 21–40 the composition is skewed to acidic residues; sequence ETPDDPETDTSDYYEEEPEN. 2 coiled-coil regions span residues 100 to 135 and 353 to 377; these read VQKC…QSYD and ETFA…TAIS.

It belongs to the dynactin subunit 2 family. As to quaternary structure, subunit of dynactin, a multiprotein complex associated with dynein.

The protein resides in the cytoplasm. It localises to the cytoskeleton. The protein localises to the membrane. Modulates cytoplasmic dynein binding to an organelle, and plays a role in prometaphase chromosome alignment and spindle organization during mitosis. May play a role in synapse formation during brain development. This Drosophila pseudoobscura pseudoobscura (Fruit fly) protein is Dynactin subunit 2.